An 820-amino-acid chain; its full sequence is Protein phosphatase 1 regulatory subunit 29 (820 aa).

The signal sequence occupies residues 1–22; the sequence is MLRLGLCAAALLCVCRPGAVRA. The Extracellular portion of the chain corresponds to 23-397; sequence DCWLIEGDKG…APSTSTTTHY (375 aa). An N-linked (GlcNAc...) asparagine glycan is attached at Asn-54. 5 LRR repeats span residues 56 to 77, 80 to 101, 104 to 125, 128 to 149, and 152 to 173; these read TVHDLRLNENKLKAVLYSSLNR, NLTDLNLTKNEISYIEDGAFLG, SLQVLQLGYNKLSNLTEGMLRG, RLQFLFVQHNLIEVVTPTAFSE, and SLISIDLSSNRLSRLDGATFAS. 3 N-linked (GlcNAc...) asparagine glycosylation sites follow: Asn-80, Asn-85, and Asn-117. The LRRCT domain occupies 185-247; that stretch reads NPFNCECDLF…ITVLQAKCRN (63 aa). N-linked (GlcNAc...) asparagine glycans are attached at residues Asn-205 and Asn-247. The disordered stretch occupies residues 250–294; sequence LPARPVSHPTPYSTDAQREPDENSGFNPDEILSVEPPASSTTDAS. One can recognise a Fibronectin type-III domain in the interval 292–379; it reads DASAGPAIKL…FNHTCLTFTT (88 aa). A helical membrane pass occupies residues 398-418; the sequence is IMTILGCLFGMVIVLGAVYYC. Over 419 to 820 the chain is Cytoplasmic; it reads LRKRRMQEEK…WKGVSAQQKL (402 aa). 2 disordered regions span residues 508–527 and 589–612; these read GAGGDGLARPEDDLPDLENG and SATGPGALERPSFLSPPYKESSHH. Ser-619, Ser-668, and Ser-672 each carry phosphoserine. Positions 654 to 677 are disordered; sequence TGLAKGDSKYIEKGSPLNSPLDRL.

In terms of assembly, interacts with PPP1CA.

It localises to the membrane. Its function is as follows. Inhibits phosphatase activity of protein phosphatase 1 (PP1) complexes. In Homo sapiens (Human), this protein is Protein phosphatase 1 regulatory subunit 29 (ELFN2).